Consider the following 845-residue polypeptide: Protein translocase subunit SecA 1 (845 aa).

Residues Q91, 109 to 113 (GEGKT), and D498 each bind ATP. A disordered region spans residues 795–845 (TDFGTAQHVSAEDGKEKAKKQPIVKGDKVGRNDPCPCGSGKKYKNCHGKEE). Residues C829, C831, C840, and H841 each contribute to the Zn(2+) site. Over residues 835 to 845 (KKYKNCHGKEE) the composition is skewed to basic residues.

This sequence belongs to the SecA family. As to quaternary structure, monomer and homodimer. Part of the essential Sec protein translocation apparatus which comprises SecA, SecYEG and auxiliary proteins SecDF. Other proteins may also be involved. It depends on Zn(2+) as a cofactor.

Its subcellular location is the cell membrane. It localises to the cytoplasm. It carries out the reaction ATP + H2O + cellular proteinSide 1 = ADP + phosphate + cellular proteinSide 2.. Its function is as follows. Part of the Sec protein translocase complex. Interacts with the SecYEG preprotein conducting channel. Has a central role in coupling the hydrolysis of ATP to the transfer of proteins into and across the cell membrane, serving as an ATP-driven molecular motor driving the stepwise translocation of polypeptide chains across the membrane. This is Protein translocase subunit SecA 1 from Staphylococcus haemolyticus (strain JCSC1435).